A 406-amino-acid chain; its full sequence is Argininosuccinate synthase (406 aa).

ATP contacts are provided by residues 12 to 20 and Ala39; that span reads AYSGGLDTS. 2 residues coordinate L-citrulline: Tyr90 and Ser95. Gly120 contributes to the ATP binding site. 3 residues coordinate L-aspartate: Thr122, Asn126, and Asp127. Residue Asn126 coordinates L-citrulline. Arg130, Ser179, Ser188, Glu264, and Tyr276 together coordinate L-citrulline.

Belongs to the argininosuccinate synthase family. Type 1 subfamily. Homotetramer.

It is found in the cytoplasm. The enzyme catalyses L-citrulline + L-aspartate + ATP = 2-(N(omega)-L-arginino)succinate + AMP + diphosphate + H(+). Its pathway is amino-acid biosynthesis; L-arginine biosynthesis; L-arginine from L-ornithine and carbamoyl phosphate: step 2/3. The polypeptide is Argininosuccinate synthase (Geotalea daltonii (strain DSM 22248 / JCM 15807 / FRC-32) (Geobacter daltonii)).